We begin with the raw amino-acid sequence, 84 residues long: U4-theraphotoxin-Hhn1a (84 aa).

An N-terminal signal peptide occupies residues Met1–Ala22. Residues Glu23 to Arg47 constitute a propeptide that is removed on maturation. 3 cysteine pairs are disulfide-bonded: Cys51/Cys65, Cys55/Cys76, and Cys70/Cys81.

This sequence belongs to the neurotoxin 12 (Hwtx-2) family. 02 (Hwtx-2) subfamily. In terms of tissue distribution, expressed by the venom gland.

It localises to the secreted. Its function is as follows. Postsynaptic neurotoxin. In Cyriopagopus hainanus (Chinese bird spider), this protein is U4-theraphotoxin-Hhn1a.